Reading from the N-terminus, the 569-residue chain is 3-oxosteroid 1-dehydrogenase (569 aa).

10–39 contacts FAD; that stretch reads DVVVVGSGAAGMVAALTAAHQGLSTVVVEK. Positions 127–148 are disordered; it reads PGGKPTGRSVEPKPFDANKLGP.

This sequence belongs to the FAD-dependent oxidoreductase 2 family. 3-oxosteroid dehydrogenase subfamily. It depends on FAD as a cofactor.

The enzyme catalyses a 3-oxosteroid + A = a 3-oxo-Delta(1)-steroid + AH2. The catalysed reaction is a 3-oxo-Delta(4)-steroid + A = a 3-oxo-Delta(1,4)-steroid + AH2. In terms of biological role, catalyzes the elimination of the C-1 and C-2 hydrogen atoms of the A-ring from the polycyclic ring structure of 3-ketosteroids. Is also involved in the formation of 1,4-androstadiene-3,17-dione (ADD) from 4-androstene-3,17-dione (AD) to. The polypeptide is 3-oxosteroid 1-dehydrogenase (ksdD) (Mycolicibacterium smegmatis (strain ATCC 700084 / mc(2)155) (Mycobacterium smegmatis)).